A 128-amino-acid chain; its full sequence is NADPH-dependent 7-cyano-7-deazaguanine reductase (128 aa).

The active-site Thioimide intermediate is C34. D41 acts as the Proton donor in catalysis. Substrate is bound by residues 56–58 and 75–76; these read IEL and HE.

The protein belongs to the GTP cyclohydrolase I family. QueF type 1 subfamily.

The protein localises to the cytoplasm. It catalyses the reaction 7-aminomethyl-7-carbaguanine + 2 NADP(+) = 7-cyano-7-deazaguanine + 2 NADPH + 3 H(+). Its pathway is tRNA modification; tRNA-queuosine biosynthesis. Functionally, catalyzes the NADPH-dependent reduction of 7-cyano-7-deazaguanine (preQ0) to 7-aminomethyl-7-deazaguanine (preQ1). This is NADPH-dependent 7-cyano-7-deazaguanine reductase from Ruthia magnifica subsp. Calyptogena magnifica.